A 356-amino-acid chain; its full sequence is MMRPQPPLFRPSIPMPHGLGDREAAILREIVEEYVETGEPIGSQTLAQRLQPSLSPATIRNVMAELARAGLLFSPHVSAGRLPTEKGVRLFVDGLLQFSSLTEEDRASIDSRLDIHGRSYQDILSEASSLLSGLSSAAGLVLAPKSDATLKHIEFVALGPGRVLVILVGSDGQVENRIIETPPGVPPSALVEAGNYLNSRLGDLTLGNLRERVRAEMDASRHELDALTASVIESGLATWDADGGTLFVKGQGKLLADITEIERLTTIRMLFDHLETQETMLQLLQLADASEGVRIYIGRESGMFGMSGVSMIVAPARNEAQKIVGAIGVIGPTRLNYGRIVPVVDYTARMVGRLLG.

Belongs to the HrcA family.

Negative regulator of class I heat shock genes (grpE-dnaK-dnaJ and groELS operons). Prevents heat-shock induction of these operons. The chain is Heat-inducible transcription repressor HrcA from Gluconobacter oxydans (strain 621H) (Gluconobacter suboxydans).